A 346-amino-acid polypeptide reads, in one-letter code: S-adenosylmethionine:tRNA ribosyltransferase-isomerase (346 aa).

It belongs to the QueA family. As to quaternary structure, monomer.

It localises to the cytoplasm. The catalysed reaction is 7-aminomethyl-7-carbaguanosine(34) in tRNA + S-adenosyl-L-methionine = epoxyqueuosine(34) in tRNA + adenine + L-methionine + 2 H(+). It functions in the pathway tRNA modification; tRNA-queuosine biosynthesis. In terms of biological role, transfers and isomerizes the ribose moiety from AdoMet to the 7-aminomethyl group of 7-deazaguanine (preQ1-tRNA) to give epoxyqueuosine (oQ-tRNA). In Neisseria meningitidis serogroup C (strain 053442), this protein is S-adenosylmethionine:tRNA ribosyltransferase-isomerase.